Here is a 510-residue protein sequence, read N- to C-terminus: NAD(P)H-quinone oxidoreductase subunit 2 B, chloroplastic (510 aa).

The next 12 membrane-spanning stretches (helical) occupy residues 24 to 44 (LLLF…GLIL), 57 to 77 (IPWL…ALLF), 99 to 119 (IFQF…VEYI), 124 to 144 (MAIT…MFLC), 183 to 203 (YLLM…WLYG), 227 to 247 (PGIS…LSPA), 295 to 315 (WHLL…LIAI), 323 to 343 (MLAY…IVGD), 347 to 367 (GYAS…GTFA), 395 to 415 (ALSS…AGFF), 418 to 438 (LHLF…IGLL), and 484 to 504 (MIVC…IIAI).

The protein belongs to the complex I subunit 2 family. As to quaternary structure, NDH is composed of at least 16 different subunits, 5 of which are encoded in the nucleus.

It is found in the plastid. The protein localises to the chloroplast thylakoid membrane. The catalysed reaction is a plastoquinone + NADH + (n+1) H(+)(in) = a plastoquinol + NAD(+) + n H(+)(out). The enzyme catalyses a plastoquinone + NADPH + (n+1) H(+)(in) = a plastoquinol + NADP(+) + n H(+)(out). NDH shuttles electrons from NAD(P)H:plastoquinone, via FMN and iron-sulfur (Fe-S) centers, to quinones in the photosynthetic chain and possibly in a chloroplast respiratory chain. The immediate electron acceptor for the enzyme in this species is believed to be plastoquinone. Couples the redox reaction to proton translocation, and thus conserves the redox energy in a proton gradient. The sequence is that of NAD(P)H-quinone oxidoreductase subunit 2 B, chloroplastic from Calycanthus floridus var. glaucus (Eastern sweetshrub).